Consider the following 295-residue polypeptide: Probable ketoamine kinase slr1563 (295 aa).

99 to 101 (EWL) lines the ATP pocket. The active-site Proton acceptor is the Asp201.

The protein belongs to the fructosamine kinase family.

Ketoamine kinase that phosphorylates ketoamines on the third carbon of the sugar moiety to generate ketoamine 3-phosphate. The sequence is that of Probable ketoamine kinase slr1563 from Synechocystis sp. (strain ATCC 27184 / PCC 6803 / Kazusa).